The chain runs to 75 residues: Penaeidin-3l (75 aa).

The N-terminal stretch at M1–G19 is a signal peptide. Q20 bears the Pyrrolidone carboxylic acid mark. 3 disulfides stabilise this stretch: C44-C59, C48-C66, and C60-C67. A Serine amide modification is found at S74.

The protein belongs to the penaeidin family.

The protein resides in the cytoplasmic granule. In terms of biological role, antibacterial and antifungal activity. Presents chitin-binding activity. This is Penaeidin-3l from Penaeus setiferus (Atlantic white shrimp).